The following is a 355-amino-acid chain: UDP-N-acetylglucosamine--N-acetylmuramyl-(pentapeptide) pyrophosphoryl-undecaprenol N-acetylglucosamine transferase (355 aa).

Residues 11–13 (TAG), Arg-164, Ser-194, and Gln-289 contribute to the UDP-N-acetyl-alpha-D-glucosamine site.

Belongs to the glycosyltransferase 28 family. MurG subfamily.

The protein resides in the cell membrane. The catalysed reaction is di-trans,octa-cis-undecaprenyl diphospho-N-acetyl-alpha-D-muramoyl-L-alanyl-D-glutamyl-meso-2,6-diaminopimeloyl-D-alanyl-D-alanine + UDP-N-acetyl-alpha-D-glucosamine = di-trans,octa-cis-undecaprenyl diphospho-[N-acetyl-alpha-D-glucosaminyl-(1-&gt;4)]-N-acetyl-alpha-D-muramoyl-L-alanyl-D-glutamyl-meso-2,6-diaminopimeloyl-D-alanyl-D-alanine + UDP + H(+). It functions in the pathway cell wall biogenesis; peptidoglycan biosynthesis. Cell wall formation. Catalyzes the transfer of a GlcNAc subunit on undecaprenyl-pyrophosphoryl-MurNAc-pentapeptide (lipid intermediate I) to form undecaprenyl-pyrophosphoryl-MurNAc-(pentapeptide)GlcNAc (lipid intermediate II). The sequence is that of UDP-N-acetylglucosamine--N-acetylmuramyl-(pentapeptide) pyrophosphoryl-undecaprenol N-acetylglucosamine transferase from Lachnoclostridium phytofermentans (strain ATCC 700394 / DSM 18823 / ISDg) (Clostridium phytofermentans).